A 612-amino-acid chain; its full sequence is Glutamine--fructose-6-phosphate aminotransferase [isomerizing] (612 aa).

Catalysis depends on C2, which acts as the Nucleophile; for GATase activity. Residues 2-221 (CGIVGIVSQR…NGDIAEITNS (220 aa)) enclose the Glutamine amidotransferase type-2 domain. 2 consecutive SIS domains span residues 289–429 (FNKT…IRKI) and 461–602 (LVKN…VDHP). The active-site For Fru-6P isomerization activity is K607.

Homodimer.

It is found in the cytoplasm. The enzyme catalyses D-fructose 6-phosphate + L-glutamine = D-glucosamine 6-phosphate + L-glutamate. Its function is as follows. Catalyzes the first step in hexosamine metabolism, converting fructose-6P into glucosamine-6P using glutamine as a nitrogen source. This chain is Glutamine--fructose-6-phosphate aminotransferase [isomerizing], found in Wigglesworthia glossinidia brevipalpis.